The primary structure comprises 71 residues: UPF0437 protein asl1434 (71 aa).

Belongs to the UPF0437 family.

The sequence is that of UPF0437 protein asl1434 from Nostoc sp. (strain PCC 7120 / SAG 25.82 / UTEX 2576).